A 167-amino-acid chain; its full sequence is Multifunctional Ser/Thr-tRNA deacylase ProXp-y (167 aa).

It localises to the cytoplasm. The enzyme catalyses L-seryl-tRNA(Lys) + H2O = tRNA(Lys) + L-serine. It carries out the reaction L-threonyl-tRNA(Lys) + H2O = tRNA(Lys) + L-threonine. The catalysed reaction is L-homoseryl-tRNA(Lys) + H2O = tRNA(Lys) + L-homoserine + H(+). It catalyses the reaction L-seryl-tRNA(Ala) + H2O = tRNA(Ala) + L-serine. The enzyme catalyses L-homoseryl-tRNA(Ser) + H2O = tRNA(Ser) + L-homoserine + H(+). It carries out the reaction L-seryl-tRNA(Thr) + H2O = tRNA(Thr) + L-serine. The catalysed reaction is L-threonyl-tRNA(Ile) + H2O = tRNA(Ile) + L-threonine. It catalyses the reaction L-threonyl-tRNA(Val) + H2O = tRNA(Val) + L-threonine. The enzyme catalyses L-threonyl-tRNA(Ser) + H2O = tRNA(Ser) + L-threonine. Its function is as follows. An aminoacyl-tRNA editing enzyme that deacylates Ser-tRNA and/or Thr-tRNA mischarged by lysyl-tRNA synthetase (LysRS), threonyl-tRNA synthetase (ThrRS), seryl-tRNA synthetase (SerRS), alanyl-tRNA synthetase (AlaRS), valyl-tRNA synthetase (ValRS) and isoleucyl-tRNA synthetase (IleRS) in vitro. Also deacylates mischarged Hse-tRNA(Lys) and Hse-tRNA(Ser), and cognate Ser-tRNA(Ser) and Thr-tRNA(Thr) in vitro. The presence of cognate ThrRS abolishes the Thr-tRNA(Thr) deacylase activity, hence this activity is not applicable physiologically. Not able to remove the amino acid moiety from cognate Val-tRNA(Val), Ile-tRNA(Ile), Lys-tRNA(Lys), Ala-tRNA(Ala) or Pro-tRNA(Pro), or from incorrectly charged Ala-tRNA(Pro), Cys-tRNA(Pro) or Leu-tRNA(Pro) in vitro. May be required in vivo to prevent mistranslation and to maintain growth when the error prone stress-inducible lysyl-tRNA synthetase (LysU) is expressed under environmental pressure. In Escherichia coli O157:H7, this protein is Multifunctional Ser/Thr-tRNA deacylase ProXp-y.